A 69-amino-acid chain; its full sequence is ATP synthase F(0) complex subunit 8 (69 aa).

Residues 8 to 24 (TWLLTITLMILALFCIY) form a helical membrane-spanning segment. Residue lysine 55 is modified to N6-acetyllysine; alternate. N6-succinyllysine; alternate is present on lysine 55. Lysine 58 carries the N6-acetyllysine modification.

Belongs to the ATPase protein 8 family. Component of the ATP synthase complex composed at least of ATP5F1A/subunit alpha, ATP5F1B/subunit beta, ATP5MC1/subunit c (homooctomer), MT-ATP6/subunit a, MT-ATP8/subunit 8, ATP5ME/subunit e, ATP5MF/subunit f, ATP5MG/subunit g, ATP5MK/subunit k, ATP5MJ/subunit j, ATP5F1C/subunit gamma, ATP5F1D/subunit delta, ATP5F1E/subunit epsilon, ATP5PF/subunit F6, ATP5PB/subunit b, ATP5PD/subunit d, ATP5PO/subunit OSCP. ATP synthase complex consists of a soluble F(1) head domain (subunits alpha(3) and beta(3)) - the catalytic core - and a membrane F(0) domain - the membrane proton channel (subunits c, a, 8, e, f, g, k and j). These two domains are linked by a central stalk (subunits gamma, delta, and epsilon) rotating inside the F1 region and a stationary peripheral stalk (subunits F6, b, d, and OSCP). Interacts with PRICKLE3.

The protein resides in the mitochondrion membrane. Functionally, subunit 8, of the mitochondrial membrane ATP synthase complex (F(1)F(0) ATP synthase or Complex V) that produces ATP from ADP in the presence of a proton gradient across the membrane which is generated by electron transport complexes of the respiratory chain. ATP synthase complex consist of a soluble F(1) head domain - the catalytic core - and a membrane F(1) domain - the membrane proton channel. These two domains are linked by a central stalk rotating inside the F(1) region and a stationary peripheral stalk. During catalysis, ATP synthesis in the catalytic domain of F(1) is coupled via a rotary mechanism of the central stalk subunits to proton translocation. In vivo, can only synthesize ATP although its ATP hydrolase activity can be activated artificially in vitro. Part of the complex F(0) domain. This is ATP synthase F(0) complex subunit 8 from Osphranter robustus (Wallaroo).